A 1233-amino-acid polypeptide reads, in one-letter code: NACHT, LRR and PYD domains-containing protein 1b allele 1 (1233 aa).

Residues 1–22 (MEESPPKQKSNTKVAQHEGQQD) form a disordered region. The 310-residue stretch at 126 to 435 (QLVIIEGAAG…EFFAAISCIL (310 aa)) folds into the NACHT domain. An ATP-binding site is contributed by 132–139 (GAAGIGKS). 2 LRR repeats span residues 627-647 (NLEG…QSLC) and 684-704 (SLTE…RMLC). Residues 850-983 (FWGPIGPVAT…GYTVLKNPSF (134 aa)) form a ZU5 region. The FIIND domain maps to 850–1133 (FWGPIGPVAT…LRPALPRIAQ (284 aa)). The interval 984–1133 (SPMGVVLRII…LRPALPRIAQ (150 aa)) is UPA. One can recognise a CARD domain in the interval 1143–1226 (HFMDQHREQL…HLVMDLLEKS (84 aa)).

The protein belongs to the NLRP family. In terms of assembly, interacts with DPP9; leading to inhibit activation of the inflammasome. DPP9 acts via formation of a ternary complex, composed of a DPP9 homodimer, one full-length Nlrp1b protein, and one cleaved C-terminus of Nlrp1b (NACHT, LRR and PYD domains-containing protein 1b, C-terminus). Interacts with DPP8; leading to inhibit activation of the inflammasome, probably via formation of a ternary complex with DPP8. Interacts (via LRR repeats) with BCL2 and BCL2L1 (via the loop between motifs BH4 and BH3). Interacts with NOD2; this interaction may increase IL1B release. Interacts with EIF2AK2/PKR; this interaction requires EIF2AK2 activity, is accompanied by EIF2AK2 autophosphorylation and promotes inflammasome assembly in response to B.anthracis lethal toxin. Interacts with MEFV; this interaction targets Nlrp1b to degradation by autophagy, hence preventing excessive IL1B- and IL18-mediated inflammation. Interacts with the C-terminal part of Nlrp1b (NACHT, LRR and PYD domains-containing protein 1b, C-terminus) in absence of pathogens and other damage-associated signals. As to quaternary structure, interacts with the N-terminal part of Nlrp1b (NACHT, LRR and PYD domains-containing protein 1b, N-terminus) in absence of pathogens and other damage-associated signals. Homomultimer; forms the Nlrp1b inflammasome polymeric complex, a filament composed of homopolymers of this form in response to pathogens and other damage-associated signals. The Nlrp1b inflammasome polymeric complex directly recruits pro-caspase-1 (proCASP1) independently of PYCARD/ASC. Interacts (via CARD domain) with CASP1 (via CARD domain); leading to CASP1 activation. Autocatalytically cleaved. Autocatalytic cleavage in FIIND region occurs constitutively, prior to activation signals, and is required for inflammasome activity (IL1B release), possibly by facilitating CASP1 binding. Both N- and C-terminal parts remain associated non-covalently. Post-translationally, ubiquitinated by UBR2, a component of the N-end rule pathway in response to pathogens and other damage-associated signals, leading to its degradation by the proteasome and subsequent release of the cleaved C-terminal part of the protein (NACHT, LRR and PYD domains-containing protein 1b, C-terminus), which polymerizes and forms the Nlrp1b inflammasome. In terms of processing, (Microbial infection) Cleavage by B.anthracis lethal toxin (LT) endopeptidase promotes ubiquitination and degradation of the N-terminal part, releasing the cleaved C-terminal part of the protein (NACHT, LRR and PYD domains-containing protein 1b, C-terminus), which polymerizes and forms the Nlrp1b inflammasome. (Microbial infection) Ubiquitinated by S.flexneri IpaH7.8, leading to its degradation by the proteasome and subsequent release of the cleaved C-terminal part of the protein (NACHT, LRR and PYD domains-containing protein 1b, C-terminus), which polymerizes and forms the Nlrp1b inflammasome. As to expression, widely expressed, including in macrophages.

The protein resides in the cytoplasm. It localises to the cytosol. The protein localises to the membrane. Its subcellular location is the inflammasome. With respect to regulation, activated by cleavage by B.anthracis lethal toxin (LT) endopeptidase: cleavage by LT promotes ubiquitination and degradation of the N-terminal part, releasing the cleaved C-terminal part of the protein (NACHT, LRR and PYD domains-containing protein 1b, C-terminus), which polymerizes and forms the Nlrp1b inflammasome. Activated by S.flexneri IpaH7.8, an E3 ubiquitin ligase that mediates ubiquitination and degradation of the N-terminal part, releasing the cleaved C-terminal part of the protein, which polymerizes and forms the Nlrp1b inflammasome. Nlrp1b inflammasome is inhibited by DPP8 and DPP9, which sequester the C-terminal fragment of Nlrp1b (NACHT, LRR and PYD domains-containing protein 1b, C-terminus) in a ternary complex, thereby preventing Nlrp1b oligomerization and activation. Nlrp1b inflammasome is activated by Val-boroPro (Talabostat, PT-100), an inhibitor of dipeptidyl peptidases DPP8 and DPP9. Val-boroPro relieves inhibition of DPP8 and/or DPP9 by promoting disruption of the ternary complex, releasing its C-terminal part from autoinhibition. Activated by metabolic inhibitors, such as 2-deoxy-D-glucose and sodium azide, by nutrient deprivation and hypoxia, possibly due to a decrease in cytosolic ATP. Also activated by Toxoplasma gondii. Not activated by muramyl dipeptide, nor by full-length bacterial peptidoglycan. Contrary to its human ortholog, not activated by positive-strand RNA virus such as Semliki Forrest virus or long dsRNA. Acts as the sensor component of the Nlrp1b inflammasome, which mediates inflammasome activation in response to various pathogen-associated signals, leading to subsequent pyroptosis. Inflammasomes are supramolecular complexes that assemble in the cytosol in response to pathogens and other damage-associated signals and play critical roles in innate immunity and inflammation. Acts as a recognition receptor (PRR): recognizes specific pathogens and other damage-associated signals, such as B.anthracis lethal toxin (LT) or Val-boroPro inhibitor, and mediates the formation of the inflammasome polymeric complex. In response to pathogen-associated signals, the N-terminal part of Nlrp1b is degraded by the proteasome, releasing the cleaved C-terminal part of the protein (NACHT, LRR and PYD domains-containing protein 1b, C-terminus), which polymerizes to initiate the formation of the inflammasome complex: the inflammasome directly recruits pro-caspase-1 (proCASP1) independently of PYCARD/ASC and promotes caspase-1 (CASP1) activation, which subsequently cleaves and activates inflammatory cytokines IL1B and IL18 and gasdermin-D (GSDMD), leading to pyroptosis. In the absence of GSDMD expression, the Nlrp1b inflammasome is able to recruit and activate CASP8, leading to activation of gasdermin-E (GSDME). Activation of Nlrp1b inflammasome is also required for HMGB1 secretion; the active cytokines and HMGB1 stimulate inflammatory responses. Primary mediator of macrophage susceptibility to B.anthracis LT: in response to B.anthracis infection, macrophages and dendritic cells release IL1B and undergo pyroptosis. This early inflammatory response to the toxin increases resistance to infection by B.anthracis spores. Its function is as follows. Constitutes the precursor of the Nlrp1b inflammasome, which mediates autoproteolytic processing within the FIIND domain to generate the N-terminal and C-terminal parts, which are associated non-covalently in absence of pathogens and other damage-associated signals. In terms of biological role, regulatory part that prevents formation of the Nlrp1b inflammasome: in absence of pathogens and other damage-associated signals, interacts with the C-terminal part of Nlrp1b (NACHT, LRR and PYD domains-containing protein 1b, C-terminus), preventing activation of the Nlrp1b inflammasome. In response to pathogen-associated signals, this part is ubiquitinated by the N-end rule pathway and degraded by the proteasome, releasing the cleaved C-terminal part of the protein, which polymerizes and forms the Nlrp1b inflammasome. Functionally, constitutes the active part of the Nlrp1b inflammasome. In absence of pathogens and other damage-associated signals, interacts with the N-terminal part of Nlrp1b (NACHT, LRR and PYD domains-containing protein 1b, N-terminus), preventing activation of the Nlrp1b inflammasome. In response to pathogen-associated signals, the N-terminal part of Nlrp1b is degraded by the proteasome, releasing this form, which polymerizes to form the Nlrp1b inflammasome complex: the Nlrp1b inflammasome complex then directly recruits pro-caspase-1 (proCASP1) and promotes caspase-1 (CASP1) activation, leading to gasdermin-D (GSDMD) cleavage and subsequent pyroptosis. The chain is NACHT, LRR and PYD domains-containing protein 1b allele 1 from Mus musculus (Mouse).